The sequence spans 199 residues: Putative lectin L633 (199 aa).

A signal peptide spans 1–25 (MNILLLLMLLTSIILLVILIFLAYN). The span at 35–48 (CITPAPESQSISPD) shows a compositional bias: polar residues. The interval 35 to 74 (CITPAPESQSISPDQTTQLQTTTPVTSTPSNPTPTTIIPN) is disordered. The segment covering 49-73 (QTTQLQTTTPVTSTPSNPTPTTIIP) has biased composition (low complexity). The 112-residue stretch at 84-195 (EIVSNGDNVL…LGQELWCATR (112 aa)) folds into the Bulb-type lectin domain. Asn-121 is a glycosylation site (N-linked (GlcNAc...) asparagine; by host).

The protein localises to the secreted. In Acanthamoeba polyphaga (Amoeba), this protein is Putative lectin L633.